A 473-amino-acid polypeptide reads, in one-letter code: Ribosomal RNA small subunit methyltransferase F (473 aa).

Residues 124 to 130 (ASAPGSK), Glu-148, Asp-175, and Asp-193 contribute to the S-adenosyl-L-methionine site. Cys-246 (nucleophile) is an active-site residue.

Belongs to the class I-like SAM-binding methyltransferase superfamily. RsmB/NOP family.

Its subcellular location is the cytoplasm. The catalysed reaction is cytidine(1407) in 16S rRNA + S-adenosyl-L-methionine = 5-methylcytidine(1407) in 16S rRNA + S-adenosyl-L-homocysteine + H(+). Functionally, specifically methylates the cytosine at position 1407 (m5C1407) of 16S rRNA. The protein is Ribosomal RNA small subunit methyltransferase F of Aliivibrio fischeri (strain ATCC 700601 / ES114) (Vibrio fischeri).